We begin with the raw amino-acid sequence, 254 residues long: Type III pantothenate kinase (254 aa).

Residue 7–14 (DVGNTRLK) participates in ATP binding. Residues tyrosine 96 and 103-106 (GSDR) each bind substrate. The active-site Proton acceptor is the aspartate 105. Threonine 133 serves as a coordination point for ATP. Position 183 (threonine 183) interacts with substrate.

It belongs to the type III pantothenate kinase family. As to quaternary structure, homodimer. NH4(+) serves as cofactor. It depends on K(+) as a cofactor.

It is found in the cytoplasm. It carries out the reaction (R)-pantothenate + ATP = (R)-4'-phosphopantothenate + ADP + H(+). Its pathway is cofactor biosynthesis; coenzyme A biosynthesis; CoA from (R)-pantothenate: step 1/5. Catalyzes the phosphorylation of pantothenate (Pan), the first step in CoA biosynthesis. The polypeptide is Type III pantothenate kinase (Paracidovorax citrulli (strain AAC00-1) (Acidovorax citrulli)).